The chain runs to 205 residues: Thiamine-phosphate synthase (205 aa).

Residues 34–38 (QLRCK) and N66 contribute to the 4-amino-2-methyl-5-(diphosphooxymethyl)pyrimidine site. The Mg(2+) site is built by D67 and D86. A 4-amino-2-methyl-5-(diphosphooxymethyl)pyrimidine-binding site is contributed by S105. 131-133 (TTT) contacts 2-[(2R,5Z)-2-carboxy-4-methylthiazol-5(2H)-ylidene]ethyl phosphate. K134 contributes to the 4-amino-2-methyl-5-(diphosphooxymethyl)pyrimidine binding site. G163 lines the 2-[(2R,5Z)-2-carboxy-4-methylthiazol-5(2H)-ylidene]ethyl phosphate pocket.

It belongs to the thiamine-phosphate synthase family. Mg(2+) is required as a cofactor.

It carries out the reaction 2-[(2R,5Z)-2-carboxy-4-methylthiazol-5(2H)-ylidene]ethyl phosphate + 4-amino-2-methyl-5-(diphosphooxymethyl)pyrimidine + 2 H(+) = thiamine phosphate + CO2 + diphosphate. The enzyme catalyses 2-(2-carboxy-4-methylthiazol-5-yl)ethyl phosphate + 4-amino-2-methyl-5-(diphosphooxymethyl)pyrimidine + 2 H(+) = thiamine phosphate + CO2 + diphosphate. It catalyses the reaction 4-methyl-5-(2-phosphooxyethyl)-thiazole + 4-amino-2-methyl-5-(diphosphooxymethyl)pyrimidine + H(+) = thiamine phosphate + diphosphate. The protein operates within cofactor biosynthesis; thiamine diphosphate biosynthesis; thiamine phosphate from 4-amino-2-methyl-5-diphosphomethylpyrimidine and 4-methyl-5-(2-phosphoethyl)-thiazole: step 1/1. Condenses 4-methyl-5-(beta-hydroxyethyl)thiazole monophosphate (THZ-P) and 2-methyl-4-amino-5-hydroxymethyl pyrimidine pyrophosphate (HMP-PP) to form thiamine monophosphate (TMP). This chain is Thiamine-phosphate synthase, found in Neisseria meningitidis serogroup A / serotype 4A (strain DSM 15465 / Z2491).